The sequence spans 208 residues: Dephospho-CoA kinase (208 aa).

In terms of domain architecture, DPCK spans 3 to 208 (EIGLTGGIGS…ALSAAGVTQA (206 aa)). Residue 11–16 (GSGKTR) coordinates ATP.

Belongs to the CoaE family.

It localises to the cytoplasm. The enzyme catalyses 3'-dephospho-CoA + ATP = ADP + CoA + H(+). It functions in the pathway cofactor biosynthesis; coenzyme A biosynthesis; CoA from (R)-pantothenate: step 5/5. Functionally, catalyzes the phosphorylation of the 3'-hydroxyl group of dephosphocoenzyme A to form coenzyme A. This chain is Dephospho-CoA kinase, found in Cupriavidus pinatubonensis (strain JMP 134 / LMG 1197) (Cupriavidus necator (strain JMP 134)).